The sequence spans 477 residues: Bifunctional protein HldE (477 aa).

Residues 1–321 are ribokinase; sequence MKILKSFTPR…EYEASLHKST (321 aa). 198–201 provides a ligand contact to ATP; sequence NKKE. Asp266 is an active-site residue. The cytidylyltransferase stretch occupies residues 348–477; the sequence is FTNGCFDILH…IQKIKGDLHV (130 aa).

This sequence in the N-terminal section; belongs to the carbohydrate kinase PfkB family. In the C-terminal section; belongs to the cytidylyltransferase family. Homodimer.

The catalysed reaction is D-glycero-beta-D-manno-heptose 7-phosphate + ATP = D-glycero-beta-D-manno-heptose 1,7-bisphosphate + ADP + H(+). The enzyme catalyses D-glycero-beta-D-manno-heptose 1-phosphate + ATP + H(+) = ADP-D-glycero-beta-D-manno-heptose + diphosphate. The protein operates within nucleotide-sugar biosynthesis; ADP-L-glycero-beta-D-manno-heptose biosynthesis; ADP-L-glycero-beta-D-manno-heptose from D-glycero-beta-D-manno-heptose 7-phosphate: step 1/4. It functions in the pathway nucleotide-sugar biosynthesis; ADP-L-glycero-beta-D-manno-heptose biosynthesis; ADP-L-glycero-beta-D-manno-heptose from D-glycero-beta-D-manno-heptose 7-phosphate: step 3/4. Catalyzes the phosphorylation of D-glycero-D-manno-heptose 7-phosphate at the C-1 position to selectively form D-glycero-beta-D-manno-heptose-1,7-bisphosphate. Its function is as follows. Catalyzes the ADP transfer from ATP to D-glycero-beta-D-manno-heptose 1-phosphate, yielding ADP-D-glycero-beta-D-manno-heptose. In Sulfurimonas denitrificans (strain ATCC 33889 / DSM 1251) (Thiomicrospira denitrificans (strain ATCC 33889 / DSM 1251)), this protein is Bifunctional protein HldE.